The chain runs to 293 residues: ATP phosphoribosyltransferase (293 aa).

This sequence belongs to the ATP phosphoribosyltransferase family. Long subfamily. Requires Mg(2+) as cofactor.

It localises to the cytoplasm. The enzyme catalyses 1-(5-phospho-beta-D-ribosyl)-ATP + diphosphate = 5-phospho-alpha-D-ribose 1-diphosphate + ATP. It functions in the pathway amino-acid biosynthesis; L-histidine biosynthesis; L-histidine from 5-phospho-alpha-D-ribose 1-diphosphate: step 1/9. Feedback inhibited by histidine. Its function is as follows. Catalyzes the condensation of ATP and 5-phosphoribose 1-diphosphate to form N'-(5'-phosphoribosyl)-ATP (PR-ATP). Has a crucial role in the pathway because the rate of histidine biosynthesis seems to be controlled primarily by regulation of HisG enzymatic activity. The chain is ATP phosphoribosyltransferase from Solidesulfovibrio magneticus (strain ATCC 700980 / DSM 13731 / RS-1) (Desulfovibrio magneticus).